The sequence spans 302 residues: Light-independent protochlorophyllide reductase iron-sulfur ATP-binding protein (302 aa).

ATP is bound by residues 46–51 (GIGKST) and Lys-75. Mg(2+) is bound at residue Ser-50. Residues Cys-131 and Cys-165 each contribute to the [4Fe-4S] cluster site. 216 to 217 (NR) contributes to the ATP binding site.

The protein belongs to the NifH/BchL/ChlL family. In terms of assembly, homodimer. Protochlorophyllide reductase is composed of three subunits; BchL, BchN and BchB. [4Fe-4S] cluster is required as a cofactor.

It carries out the reaction chlorophyllide a + oxidized 2[4Fe-4S]-[ferredoxin] + 2 ADP + 2 phosphate = protochlorophyllide a + reduced 2[4Fe-4S]-[ferredoxin] + 2 ATP + 2 H2O. The protein operates within porphyrin-containing compound metabolism; bacteriochlorophyll biosynthesis (light-independent). Its function is as follows. Component of the dark-operative protochlorophyllide reductase (DPOR) that uses Mg-ATP and reduced ferredoxin to reduce ring D of protochlorophyllide (Pchlide) to form chlorophyllide a (Chlide). This reaction is light-independent. The L component serves as a unique electron donor to the NB-component of the complex, and binds Mg-ATP. This chain is Light-independent protochlorophyllide reductase iron-sulfur ATP-binding protein, found in Methylocella silvestris (strain DSM 15510 / CIP 108128 / LMG 27833 / NCIMB 13906 / BL2).